The following is a 307-amino-acid chain: Glycine--tRNA ligase alpha subunit (307 aa).

This sequence belongs to the class-II aminoacyl-tRNA synthetase family. In terms of assembly, tetramer of two alpha and two beta subunits.

The protein resides in the cytoplasm. The catalysed reaction is tRNA(Gly) + glycine + ATP = glycyl-tRNA(Gly) + AMP + diphosphate. This Aeromonas salmonicida (strain A449) protein is Glycine--tRNA ligase alpha subunit.